A 206-amino-acid polypeptide reads, in one-letter code: Macrophage immunometabolism regulator (206 aa).

Met1 is modified (N-acetylmethionine). The segment at 1–41 (MEVDINGESRSTLTTLPFPGAEANSPGKAEAEKPRCSSTPC) is disordered. A phosphoserine mark is found at Ser25, Ser140, and Ser167.

The protein belongs to the UNC119-binding protein family. In terms of assembly, interacts with UNC119 and UNC119B; interaction preferentially takes place when UNC119 and UNC119B are unliganded with myristoylated proteins.

The protein localises to the cytoplasm. It is found in the cell projection. The protein resides in the cilium. Regulates the macrophage function, by enhancing the resolution of inflammation and wound repair functions mediated by M2 macrophages. The regulation of macrophage function is, due at least in part, to its ability to inhibit glycolysis. May also play a role in trafficking of proteins via its interaction with UNC119 and UNC119B cargo adapters: may help the release of UNC119 and UNC119B cargo or the recycling of UNC119 and UNC119B. May play a role in ciliary membrane localization via its interaction with UNC119B and protein transport into photoreceptor cells. The sequence is that of Macrophage immunometabolism regulator (MACIR) from Pongo abelii (Sumatran orangutan).